The primary structure comprises 445 residues: Phosphoglucosamine mutase (445 aa).

Catalysis depends on S102, which acts as the Phosphoserine intermediate. Mg(2+) contacts are provided by S102, D241, D243, and D245. Position 102 is a phosphoserine (S102).

The protein belongs to the phosphohexose mutase family. Mg(2+) serves as cofactor. Activated by phosphorylation.

The catalysed reaction is alpha-D-glucosamine 1-phosphate = D-glucosamine 6-phosphate. Functionally, catalyzes the conversion of glucosamine-6-phosphate to glucosamine-1-phosphate. The chain is Phosphoglucosamine mutase from Salmonella paratyphi A (strain ATCC 9150 / SARB42).